Reading from the N-terminus, the 213-residue chain is Receptor-binding cancer antigen expressed on SiSo cells (213 aa).

Residues 1–7 (MAITQFR) lie on the Extracellular side of the membrane. Residues 8 to 27 (LFKVCTCLATVFSFLKRLIC) form a helical; Signal-anchor for type III membrane protein membrane-spanning segment. Over 28–213 (RSGRGRKLSG…EQNKIGVKLS (186 aa)) the chain is Cytoplasmic. Residue Ser36 is modified to Phosphoserine. A Phosphothreonine modification is found at Thr41. Tyr94 carries the post-translational modification Phosphotyrosine. Residues 163-211 (EDAAWQAEEVLRQQKIADREKRAAEQQRKKMEKEAQRLMKKEQNKIGVK) are a coiled coil. Residues 179-206 (ADREKRAAEQQRKKMEKEAQRLMKKEQN) show a composition bias toward basic and acidic residues. The segment at 179–213 (ADREKRAAEQQRKKMEKEAQRLMKKEQNKIGVKLS) is disordered.

As to quaternary structure, homodimer. As to expression, widely expressed. Expressed in heart, brain, spleen, liver, kidney and testis.

The protein resides in the golgi apparatus membrane. May participate in suppression of cell proliferation and induces apoptotic cell death through activation of interleukin-1-beta converting enzyme (ICE)-like proteases. The polypeptide is Receptor-binding cancer antigen expressed on SiSo cells (Ebag9) (Mus musculus (Mouse)).